The sequence spans 135 residues: DNA-binding protein H-NS homolog (135 aa).

The DNA-binding element occupies 112-117 (QGRTPS).

This sequence belongs to the histone-like protein H-NS family. Homodimer that oligomerizes on DNA into higher-order complexes that form bridges between disparate regions of DNA compacting it.

The protein resides in the cytoplasm. It localises to the nucleoid. A DNA-binding protein implicated in transcriptional repression and chromosome organization and compaction. Binds nucleation sites in AT-rich DNA and bridges them, forming higher-order nucleoprotein complexes and condensing the chromosome. A subset of genes are repressed by H-NS in association with other proteins. This Buchnera aphidicola subsp. Acyrthosiphon pisum (strain APS) (Acyrthosiphon pisum symbiotic bacterium) protein is DNA-binding protein H-NS homolog (hns).